The chain runs to 424 residues: Probable serine/threonine-protein kinase PBL12 (424 aa).

The Protein kinase domain occupies 88-368; the sequence is FSRSNMLGEG…CEVVKVLESI (281 aa). ATP-binding positions include 94–102 and Lys123; that span reads LGEGGFGPV. Asp218 acts as the Proton acceptor in catalysis.

It belongs to the protein kinase superfamily. Ser/Thr protein kinase family. Expressed specifically in roots.

It localises to the cell membrane. It catalyses the reaction L-seryl-[protein] + ATP = O-phospho-L-seryl-[protein] + ADP + H(+). The catalysed reaction is L-threonyl-[protein] + ATP = O-phospho-L-threonyl-[protein] + ADP + H(+). In terms of biological role, may play a role in the signal transduction pathway of osmotic stress. May be involved in plant defense signaling. This chain is Probable serine/threonine-protein kinase PBL12, found in Arabidopsis thaliana (Mouse-ear cress).